Consider the following 297-residue polypeptide: tRNA pseudouridine synthase B (297 aa).

Asp41 serves as the catalytic Nucleophile.

Belongs to the pseudouridine synthase TruB family. Type 1 subfamily.

It catalyses the reaction uridine(55) in tRNA = pseudouridine(55) in tRNA. Its function is as follows. Responsible for synthesis of pseudouridine from uracil-55 in the psi GC loop of transfer RNAs. This chain is tRNA pseudouridine synthase B, found in Synechococcus sp. (strain CC9311).